The primary structure comprises 214 residues: ER lumen protein-retaining receptor 3 (214 aa).

At 1–4 the chain is on the lumenal side; it reads MNIF. A helical membrane pass occupies residues 5–24; it reads RILGDVSHLLAIIILLLKMW. Residues 25–32 lie on the Cytoplasmic side of the membrane; it reads KSKSCAGI. Residues 33 to 52 traverse the membrane as a helical segment; sequence SGKSQLLFALVFTTRYLDLF. An interaction with the K-D-E-L motif on target proteins region spans residues 47–48; it reads RY. Residues 53-58 lie on the Lumenal side of the membrane; the sequence is TVFISP. The chain crosses the membrane as a helical span at residues 59-79; that stretch reads YNTVMKIIFLACAYVTVYLIY. At 80–92 the chain is on the cytoplasmic side; that stretch reads GKLRKSYDSENDT. The helical transmembrane segment at 93–110 threads the bilayer; sequence FRLEFLLVPVIGLSFLEN. Residues 111–116 are Lumenal-facing; the sequence is YEFTPL. Residues 117–135 traverse the membrane as a helical segment; it reads EILWTFSIYLESVAILPQL. Residues 136–149 lie on the Cytoplasmic side of the membrane; that stretch reads FMISKTGEAESITT. The helical transmembrane segment at 150–168 threads the bilayer; sequence HYLFFLGLYRVLYLANWIW. The segment at 159–169 is interaction with the K-D-E-L motif on target proteins; it reads RVLYLANWIWR. Residues 169 to 178 are Lumenal-facing; that stretch reads RYHTEKFYDQ. The helical transmembrane segment at 179-199 threads the bilayer; that stretch reads IAVVSGVVQTIFYFDFFYLYV. The Cytoplasmic segment spans residues 200 to 214; it reads TKVLKGKKLSLPMPV. The tract at residues 204–207 is important for recycling of cargo proteins with the sequence motif K-D-E-L from the Golgi to the endoplasmic reticulum; sequence KGKK.

Belongs to the ERD2 family.

It is found in the endoplasmic reticulum membrane. Its subcellular location is the golgi apparatus membrane. The protein resides in the cytoplasmic vesicle. The protein localises to the COPI-coated vesicle membrane. Its function is as follows. Receptor for the C-terminal sequence motif K-D-E-L that is present on endoplasmic reticulum resident proteins and that mediates their recycling from the Golgi back to the endoplasmic reticulum. The protein is ER lumen protein-retaining receptor 3 (kdelr3) of Xenopus laevis (African clawed frog).